Here is a 146-residue protein sequence, read N- to C-terminus: Flavodoxin (146 aa).

Residues 4–143 form the Flavodoxin-like domain; the sequence is SLIVYGSTTG…EIVSWGSGIA (140 aa).

This sequence belongs to the flavodoxin family. FMN is required as a cofactor.

Its function is as follows. Low-potential electron donor to a number of redox enzymes. This chain is Flavodoxin, found in Maridesulfovibrio salexigens (strain ATCC 14822 / DSM 2638 / NCIMB 8403 / VKM B-1763) (Desulfovibrio salexigens).